The chain runs to 1390 residues: DNA-directed RNA polymerase subunit beta' (1390 aa).

Zn(2+) contacts are provided by cysteine 70, cysteine 72, cysteine 85, and cysteine 88. Mg(2+) contacts are provided by aspartate 460, aspartate 462, and aspartate 464. The Zn(2+) site is built by cysteine 814, cysteine 888, cysteine 895, and cysteine 898.

It belongs to the RNA polymerase beta' chain family. As to quaternary structure, the RNAP catalytic core consists of 2 alpha, 1 beta, 1 beta' and 1 omega subunit. When a sigma factor is associated with the core the holoenzyme is formed, which can initiate transcription. Mg(2+) serves as cofactor. The cofactor is Zn(2+).

It catalyses the reaction RNA(n) + a ribonucleoside 5'-triphosphate = RNA(n+1) + diphosphate. Its function is as follows. DNA-dependent RNA polymerase catalyzes the transcription of DNA into RNA using the four ribonucleoside triphosphates as substrates. The protein is DNA-directed RNA polymerase subunit beta' of Pseudoalteromonas translucida (strain TAC 125).